We begin with the raw amino-acid sequence, 378 residues long: 1-acyl-sn-glycerol-3-phosphate acyltransferase delta (378 aa).

A helical membrane pass occupies residues Phe-11–Ile-31. The HXXXXD motif signature appears at His-96–Asp-101. A run of 3 helical transmembrane segments spans residues Glu-125 to Ser-145, Thr-307 to Val-327, and Leu-338 to Val-358.

This sequence belongs to the 1-acyl-sn-glycerol-3-phosphate acyltransferase family.

The protein resides in the endoplasmic reticulum membrane. It carries out the reaction a 1-acyl-sn-glycero-3-phosphate + an acyl-CoA = a 1,2-diacyl-sn-glycero-3-phosphate + CoA. The catalysed reaction is (4Z,7Z,10Z,13Z,16Z,19Z)-docosahexaenoyl-CoA + 1-hexadecanoyl-sn-glycero-3-phosphate = 1-hexadecanoyl-2-(4Z,7Z,10Z,13Z,16Z,19Z-docosahexaenoyl)-sn-glycero-3-phosphate + CoA. The enzyme catalyses 1-octadecanoyl-sn-glycero-3-phosphate + (9Z,12Z)-octadecadienoyl-CoA = 1-octadecanoyl-2-(9Z,12Z-octadecadienoyl)-sn-glycero-3-phosphate + CoA. It catalyses the reaction 1-octadecanoyl-sn-glycero-3-phosphate + (4Z,7Z,10Z,13Z,16Z,19Z)-docosahexaenoyl-CoA = 1-octadecanoyl-2-(4Z,7Z,10Z,13Z,16Z,19Z-docosahexaenoyl)-sn-glycero-3-phosphate + CoA. It carries out the reaction (4Z,7Z,10Z,13Z,16Z,19Z)-docosahexaenoyl-CoA + 1-(9Z-octadecenoyl)-sn-glycero-3-phosphate = 1-(9Z-octadecenoyl)-2-(4Z,7Z,10Z,13Z,16Z,19Z-docosahexaenoyl)-sn-glycero-3-phosphate + CoA. It participates in phospholipid metabolism; CDP-diacylglycerol biosynthesis; CDP-diacylglycerol from sn-glycerol 3-phosphate: step 2/3. Functionally, converts 1-acyl-sn-glycerol-3-phosphate (lysophosphatidic acid or LPA) into 1,2-diacyl-sn-glycerol-3-phosphate (phosphatidic acid or PA) by incorporating an acyl moiety at the sn-2 position of the glycerol backbone. Exhibits high acyl-CoA specificity for polyunsaturated fatty acyl-CoA, especially docosahexaenoyl-CoA (22:6-CoA, DHA-CoA). The chain is 1-acyl-sn-glycerol-3-phosphate acyltransferase delta (AGPAT4) from Pongo abelii (Sumatran orangutan).